Here is a 332-residue protein sequence, read N- to C-terminus: Ferredoxin--NADP reductase 1 (332 aa).

Positions 35, 43, 48, 88, 123, 284, and 325 each coordinate FAD.

Belongs to the ferredoxin--NADP reductase type 2 family. In terms of assembly, homodimer. FAD is required as a cofactor.

It catalyses the reaction 2 reduced [2Fe-2S]-[ferredoxin] + NADP(+) + H(+) = 2 oxidized [2Fe-2S]-[ferredoxin] + NADPH. In Listeria monocytogenes serotype 4b (strain F2365), this protein is Ferredoxin--NADP reductase 1.